The sequence spans 634 residues: Coilin (634 aa).

Disordered stretches follow at residues 87–135 (VSPA…IAEN), 149–276 (PGPS…KLSQ), and 342–361 (GAKS…DSTL). Over residues 152-181 (SVQSKLLTNKGTPKAPETQTEVSNMSANIE) the composition is skewed to polar residues. Composition is skewed to basic and acidic residues over residues 223-234 (TLKEGKMSESKN) and 251-272 (KENE…KIPD).

The protein belongs to the coilin family. In terms of tissue distribution, in egg chambers expressed in the follicle cells, nurse cells and oocyte. Expressed in the larval brain, salivary glands, fat bodies and in the somatic hub cells at the tip of the testis. Expressed in the spermatogonia and spermatocytes, and in the adult ejaculatory duct (at protein level). Expressed in the adult Malpighian tubules.

The protein resides in the nucleus. It is found in the nucleoplasm. Its subcellular location is the cajal body. The protein localises to the chromosome. It localises to the centromere. The protein resides in the cytoplasm. It is found in the cytoskeleton. Its subcellular location is the spindle. Its function is as follows. Component of nuclear coiled bodies, also known as Cajal bodies or CBs, which are involved in the modification and assembly of nucleoplasmic snRNPs. Required for Cajal body formation. In Drosophila melanogaster (Fruit fly), this protein is Coilin.